The primary structure comprises 704 residues: MATTSSNPLLLSSNFLGSQIIISAPTPKTTTKSLPFSVISRKRYQISQSEKLMKSLPSQAALAALLFSSSSPQALAVNEPVQPPAPTITAEAQSPNLSTFGQNVLMTAPNPQAQSSDLPDGTQWRYSEFLNAVKKGKVERVKFSKDGSVLQLTAVDNRRATVIVPNDPDLIDILAMNGVDISVSEGEGGNGLFDFIGNLLFPLLAFGGLFYLFRGGQGGAGGPGGLGGPMDFGRSKSKFQEVPETGVTFGDVAGADQAKLELQEVVDFLKNPDKYTALGAKIPKGCLLVGPPGTGKTLLARAVAGEAGVPFFSCAASEFVELFVGVGASRVRDLFEKAKSKAPCIVFIDEIDAVGRQRGAGMGGGNDEREQTINQLLTEMDGFSGNSGVIVLAATNRPDVLDSALLRPGRFDRQVTVDRPDVAGRVQILKVHSRGKAIGKDVDYEKVARRTPGFTGADLQNLMNEAAILAARRELKEISKDEISDALERIIAGPEKKNAVVSEEKKRLVAYHEAGHALVGALMPEYDPVAKISIIPRGQAGGLTFFAPSEERLESGLYSRSYLENQMAVALGGRVAEEVIFGDENVTTGASNDFMQVSRVARQMVERFGFSKKIGQVAVGGAGGNPFLGQSMSSQKDYSMATADVVDAEVRELVEKAYVRAKEIITTQIDILHKLAQLLIEKETVDGEEFMSLFIDGQAELYVS.

The N-terminal 58 residues, M1 to S58, are a transit peptide targeting the chloroplast. The transit peptide at Q59–A76 directs the protein to the thylakoid. The helical transmembrane segment at F193–F213 threads the bilayer. G290–T297 lines the ATP pocket. H512 is a binding site for Zn(2+). The active site involves E513. Zn(2+)-binding residues include H516 and D593.

The protein in the N-terminal section; belongs to the AAA ATPase family. In the C-terminal section; belongs to the peptidase M41 family. In terms of assembly, heterohexamers with FTSH1, FTSH2 and FTSH8. It depends on Zn(2+) as a cofactor. Ubiquitous.

The protein localises to the plastid. The protein resides in the chloroplast thylakoid membrane. Functionally, part of a complex that function as an ATP-dependent zinc metallopeptidase. Involved in the thylakoid formation and in the removal of damaged D1 in the photosystem II, preventing cell death under high-intensity light conditions. Not involved in the degradation of the light-harvesting complex of photosystem II (LHC II) or in thermotolerance. The protein is ATP-dependent zinc metalloprotease FTSH 5, chloroplastic (FTSH5) of Arabidopsis thaliana (Mouse-ear cress).